The primary structure comprises 181 residues: Oligoribonuclease (181 aa).

In terms of domain architecture, Exonuclease spans 8–171 (LIWIDLEMTG…DDIRESIAEL (164 aa)). Tyrosine 129 is a catalytic residue.

It belongs to the oligoribonuclease family.

The protein resides in the cytoplasm. Its function is as follows. 3'-to-5' exoribonuclease specific for small oligoribonucleotides. This chain is Oligoribonuclease, found in Vibrio cholerae serotype O1 (strain ATCC 39541 / Classical Ogawa 395 / O395).